Here is a 102-residue protein sequence, read N- to C-terminus: Large ribosomal subunit protein uL24 (102 aa).

This sequence belongs to the universal ribosomal protein uL24 family. As to quaternary structure, part of the 50S ribosomal subunit.

Its function is as follows. One of two assembly initiator proteins, it binds directly to the 5'-end of the 23S rRNA, where it nucleates assembly of the 50S subunit. Functionally, one of the proteins that surrounds the polypeptide exit tunnel on the outside of the subunit. This Rhizobium johnstonii (strain DSM 114642 / LMG 32736 / 3841) (Rhizobium leguminosarum bv. viciae) protein is Large ribosomal subunit protein uL24.